Consider the following 570-residue polypeptide: Proline--tRNA ligase (570 aa).

It belongs to the class-II aminoacyl-tRNA synthetase family. ProS type 1 subfamily. As to quaternary structure, homodimer.

The protein resides in the cytoplasm. It catalyses the reaction tRNA(Pro) + L-proline + ATP = L-prolyl-tRNA(Pro) + AMP + diphosphate. In terms of biological role, catalyzes the attachment of proline to tRNA(Pro) in a two-step reaction: proline is first activated by ATP to form Pro-AMP and then transferred to the acceptor end of tRNA(Pro). As ProRS can inadvertently accommodate and process non-cognate amino acids such as alanine and cysteine, to avoid such errors it has two additional distinct editing activities against alanine. One activity is designated as 'pretransfer' editing and involves the tRNA(Pro)-independent hydrolysis of activated Ala-AMP. The other activity is designated 'posttransfer' editing and involves deacylation of mischarged Ala-tRNA(Pro). The misacylated Cys-tRNA(Pro) is not edited by ProRS. The protein is Proline--tRNA ligase of Thermoanaerobacter pseudethanolicus (strain ATCC 33223 / 39E) (Clostridium thermohydrosulfuricum).